We begin with the raw amino-acid sequence, 51 residues long: U-Asilidin(1)-Mar1a (51 aa).

The signal sequence occupies residues 1-23 (MANYIEVFSVLAIIFATVLAALA). Intrachain disulfides connect cysteine 26/cysteine 40, cysteine 33/cysteine 44, and cysteine 39/cysteine 49.

It belongs to the asilidin-1 family. As to expression, expressed by the venom gland. Is the most highly expressed peptide and is around 3000 times higher expressed in the thoracic glands compared to its body tissues.

Its subcellular location is the secreted. Induces neurotoxic effect on honeybees, including slow movements, disorientation and paralysis. Since it provokes similar symptoms than omega-atracotoxin, it is probable that it acts in the same way by inhibiting voltage-gated calcium channels. The sequence is that of U-Asilidin(1)-Mar1a from Machimus arthriticus (Breck robberfly).